A 436-amino-acid polypeptide reads, in one-letter code: GTPase Der (436 aa).

EngA-type G domains are found at residues 4–167 (PTIA…PAQE) and 175–351 (IKFS…ESQN). GTP contacts are provided by residues 10–17 (GRPNVGKS), 57–61 (DTGGI), 119–122 (NKVD), 181–188 (GRPNVGKS), 229–233 (DTAGM), and 294–297 (NKWD). The region spanning 352–436 (TRIPSAVLND…PIHLIARKRK (85 aa)) is the KH-like domain.

Belongs to the TRAFAC class TrmE-Era-EngA-EngB-Septin-like GTPase superfamily. EngA (Der) GTPase family. Associates with the 50S ribosomal subunit.

In terms of biological role, GTPase that plays an essential role in the late steps of ribosome biogenesis. The protein is GTPase Der of Streptococcus suis (strain 98HAH33).